A 769-amino-acid polypeptide reads, in one-letter code: Phenylalanine--tRNA ligase beta subunit (769 aa).

A tRNA-binding domain is found at 40–141 (GKLLTIARVA…GEPIPGCEPD (102 aa)). One can recognise a B5 domain in the interval 389-467 (PAPPPIELPL…RMIGYDSIAP (79 aa)). Mg(2+) contacts are provided by Asp445, Asp451, Glu454, and Glu455. The region spanning 676–768 (RRYPSSAFDL…GMRAKGYELR (93 aa)) is the FDX-ACB domain.

The protein belongs to the phenylalanyl-tRNA synthetase beta subunit family. Type 1 subfamily. As to quaternary structure, tetramer of two alpha and two beta subunits. It depends on Mg(2+) as a cofactor.

The protein localises to the cytoplasm. The enzyme catalyses tRNA(Phe) + L-phenylalanine + ATP = L-phenylalanyl-tRNA(Phe) + AMP + diphosphate + H(+). In Solibacter usitatus (strain Ellin6076), this protein is Phenylalanine--tRNA ligase beta subunit.